We begin with the raw amino-acid sequence, 309 residues long: Homoserine O-succinyltransferase (309 aa).

The active-site Acyl-thioester intermediate is cysteine 142. 2 residues coordinate substrate: lysine 163 and serine 192. Catalysis depends on histidine 235, which acts as the Proton acceptor. The active site involves glutamate 237. Arginine 249 contributes to the substrate binding site.

The protein belongs to the MetA family.

Its subcellular location is the cytoplasm. It catalyses the reaction L-homoserine + succinyl-CoA = O-succinyl-L-homoserine + CoA. It functions in the pathway amino-acid biosynthesis; L-methionine biosynthesis via de novo pathway; O-succinyl-L-homoserine from L-homoserine: step 1/1. In terms of biological role, transfers a succinyl group from succinyl-CoA to L-homoserine, forming succinyl-L-homoserine. The sequence is that of Homoserine O-succinyltransferase from Pectobacterium carotovorum subsp. carotovorum (strain PC1).